A 381-amino-acid polypeptide reads, in one-letter code: O-phospho-L-seryl-tRNA:Cys-tRNA synthase (381 aa).

Pyridoxal 5'-phosphate contacts are provided by residues 86–87, Asn-192, and 215–217; these read AR and SGH. Lys-218 carries the post-translational modification N6-(pyridoxal phosphate)lysine.

Belongs to the SepCysS family. As to quaternary structure, homodimer. Interacts with SepRS. Pyridoxal 5'-phosphate serves as cofactor.

It carries out the reaction O-phospho-L-seryl-tRNA(Cys) + hydrogen sulfide + H(+) = L-cysteinyl-tRNA(Cys) + phosphate. Functionally, converts O-phospho-L-seryl-tRNA(Cys) (Sep-tRNA(Cys)) to L-cysteinyl-tRNA(Cys) (Cys-tRNA(Cys)). This chain is O-phospho-L-seryl-tRNA:Cys-tRNA synthase, found in Methanococcus vannielii (strain ATCC 35089 / DSM 1224 / JCM 13029 / OCM 148 / SB).